Here is a 341-residue protein sequence, read N- to C-terminus: tRNA N6-adenosine threonylcarbamoyltransferase (341 aa).

The Fe cation site is built by His115 and His119. Residues 137-141 (IVSGG), Asp170, Gly183, Asp187, and Asn276 each bind substrate. Fe cation is bound at residue Asp304.

It belongs to the KAE1 / TsaD family. The cofactor is Fe(2+).

Its subcellular location is the cytoplasm. The enzyme catalyses L-threonylcarbamoyladenylate + adenosine(37) in tRNA = N(6)-L-threonylcarbamoyladenosine(37) in tRNA + AMP + H(+). In terms of biological role, required for the formation of a threonylcarbamoyl group on adenosine at position 37 (t(6)A37) in tRNAs that read codons beginning with adenine. Is involved in the transfer of the threonylcarbamoyl moiety of threonylcarbamoyl-AMP (TC-AMP) to the N6 group of A37, together with TsaE and TsaB. TsaD likely plays a direct catalytic role in this reaction. This is tRNA N6-adenosine threonylcarbamoyltransferase from Staphylococcus aureus (strain USA300).